The chain runs to 187 residues: Large ribosomal subunit protein uL5 (187 aa).

Belongs to the universal ribosomal protein uL5 family. Part of the 50S ribosomal subunit; part of the 5S rRNA/L5/L18/L25 subcomplex. Contacts the 5S rRNA and the P site tRNA. Forms a bridge to the 30S subunit in the 70S ribosome.

Functionally, this is one of the proteins that bind and probably mediate the attachment of the 5S RNA into the large ribosomal subunit, where it forms part of the central protuberance. In the 70S ribosome it contacts protein S13 of the 30S subunit (bridge B1b), connecting the 2 subunits; this bridge is implicated in subunit movement. Contacts the P site tRNA; the 5S rRNA and some of its associated proteins might help stabilize positioning of ribosome-bound tRNAs. This Mycobacterium bovis (strain ATCC BAA-935 / AF2122/97) protein is Large ribosomal subunit protein uL5.